Reading from the N-terminus, the 907-residue chain is Protein translocase subunit SecA (907 aa).

Residues Gln87, 105-109 (GEGKT), and Asp510 each bind ATP. Zn(2+) contacts are provided by Cys892, Cys894, Cys903, and His904.

This sequence belongs to the SecA family. As to quaternary structure, monomer and homodimer. Part of the essential Sec protein translocation apparatus which comprises SecA, SecYEG and auxiliary proteins SecDF-YajC and YidC. It depends on Zn(2+) as a cofactor.

The protein resides in the cell inner membrane. It localises to the cytoplasm. It catalyses the reaction ATP + H2O + cellular proteinSide 1 = ADP + phosphate + cellular proteinSide 2.. In terms of biological role, part of the Sec protein translocase complex. Interacts with the SecYEG preprotein conducting channel. Has a central role in coupling the hydrolysis of ATP to the transfer of proteins into and across the cell membrane, serving both as a receptor for the preprotein-SecB complex and as an ATP-driven molecular motor driving the stepwise translocation of polypeptide chains across the membrane. This Acinetobacter baumannii (strain ACICU) protein is Protein translocase subunit SecA.